The chain runs to 189 residues: Elongation factor P (189 aa).

Position 34 is an N6-(3,6-diaminohexanoyl)-5-hydroxylysine (lysine 34).

Belongs to the elongation factor P family. May be beta-lysylated on the epsilon-amino group of Lys-34 by the combined action of EpmA and EpmB, and then hydroxylated on the C5 position of the same residue by EpmC (if this protein is present). Lysylation is critical for the stimulatory effect of EF-P on peptide-bond formation. The lysylation moiety may extend toward the peptidyltransferase center and stabilize the terminal 3-CCA end of the tRNA. Hydroxylation of the C5 position on Lys-34 may allow additional potential stabilizing hydrogen-bond interactions with the P-tRNA.

The protein resides in the cytoplasm. It functions in the pathway protein biosynthesis; polypeptide chain elongation. Its function is as follows. Involved in peptide bond synthesis. Alleviates ribosome stalling that occurs when 3 or more consecutive Pro residues or the sequence PPG is present in a protein, possibly by augmenting the peptidyl transferase activity of the ribosome. Modification of Lys-34 is required for alleviation. The polypeptide is Elongation factor P (Acinetobacter baumannii (strain AB307-0294)).